The following is a 165-amino-acid chain: Ribosome maturation factor RimM (165 aa).

Residues 90-161 enclose the PRC barrel domain; that stretch reads PDTYYVSDLK…KIIIKPVGEW (72 aa).

It belongs to the RimM family. As to quaternary structure, binds ribosomal protein uS19.

It is found in the cytoplasm. In terms of biological role, an accessory protein needed during the final step in the assembly of 30S ribosomal subunit, possibly for assembly of the head region. Essential for efficient processing of 16S rRNA. May be needed both before and after RbfA during the maturation of 16S rRNA. It has affinity for free ribosomal 30S subunits but not for 70S ribosomes. This is Ribosome maturation factor RimM from Clostridium beijerinckii (strain ATCC 51743 / NCIMB 8052) (Clostridium acetobutylicum).